The primary structure comprises 191 residues: dCTP deaminase (191 aa).

DCTP is bound by residues 112 to 117 (KSTYAR), 136 to 138 (TLE), Gln-157, Tyr-173, and Gln-183. Glu-138 (proton donor/acceptor) is an active-site residue.

It belongs to the dCTP deaminase family. In terms of assembly, homotrimer.

The catalysed reaction is dCTP + H2O + H(+) = dUTP + NH4(+). The protein operates within pyrimidine metabolism; dUMP biosynthesis; dUMP from dCTP (dUTP route): step 1/2. Its function is as follows. Catalyzes the deamination of dCTP to dUTP. The polypeptide is dCTP deaminase (Xylella fastidiosa (strain 9a5c)).